The sequence spans 396 residues: Anaerobic glycerol-3-phosphate dehydrogenase subunit C (396 aa).

4Fe-4S ferredoxin-type domains lie at 2–29 (NDTS…PGYP) and 45–76 (DGAL…GDII). Residues cysteine 9, cysteine 12, cysteine 15, cysteine 19, cysteine 56, cysteine 59, cysteine 62, and cysteine 66 each contribute to the [4Fe-4S] cluster site.

As to quaternary structure, composed of a catalytic GlpA/B dimer and of GlpC.

Its subcellular location is the cell inner membrane. It functions in the pathway polyol metabolism; glycerol degradation via glycerol kinase pathway; glycerone phosphate from sn-glycerol 3-phosphate (anaerobic route): step 1/1. In terms of biological role, electron transfer protein; may also function as the membrane anchor for the GlpAB dimer. The protein is Anaerobic glycerol-3-phosphate dehydrogenase subunit C (glpC) of Escherichia coli O157:H7.